We begin with the raw amino-acid sequence, 352 residues long: PDZ and LIM domain protein 2 (352 aa).

Residues 1 to 84 (MALTVDVAGP…PLRLQLDRSQ (84 aa)) form the PDZ domain. Disordered stretches follow at residues 69-95 (IRQS…NGDS) and 108-141 (VRTH…PPPF). Positions 81 to 95 (DRSQAASPGQTNGDS) are enriched in polar residues. The segment covering 117–135 (SLRSSYSSPTSLSPRAGSP) has biased composition (low complexity). Phosphoserine is present on Ser-124. The residue at position 126 (Thr-126) is a Phosphothreonine. 10 positions are modified to phosphoserine: Ser-127, Ser-129, Ser-134, Ser-137, Ser-143, Ser-161, Ser-197, Ser-203, Ser-213, and Ser-266. Disordered stretches follow at residues 170-214 (LSYS…GGSL) and 253-275 (ERGG…PASR). A compositionally biased stretch (low complexity) spans 258–275 (PAFLPSSLSPQSSLPASR). Residues 284–344 (HTCEKCSTSI…EKHARQRYSA (61 aa)) form the LIM zinc-binding domain.

In terms of assembly, interacts with alpha-actinins ACTN1 and ACTN4, FLNA and MYH9. Interacts (via LIM zinc-binding domain) with MKRN2.

Its subcellular location is the cytoplasm. It localises to the cytoskeleton. Its function is as follows. Probable adapter protein located at the actin cytoskeleton that promotes cell attachment. Necessary for the migratory capacity of epithelial cells. Overexpression enhances cell adhesion to collagen and fibronectin and suppresses anchorage independent growth. May contribute to tumor cell migratory capacity. The chain is PDZ and LIM domain protein 2 (PDLIM2) from Macaca fascicularis (Crab-eating macaque).